A 639-amino-acid chain; its full sequence is ADP-ribosylation factor-binding protein GGA1 (639 aa).

Residue M1 is modified to N-acetylmethionine. The region spanning 17–147 (ATNPLNKELD…MLKKQGIVKS (131 aa)) is the VHS domain. Positions 114 to 274 (KILELLYSWT…RLASDTEDND (161 aa)) are interaction with ARF3. The GAT domain maps to 171-299 (DEEKSKMLAR…VINLYKQLVR (129 aa)). S185 is modified (phosphoserine). Residues 300–509 (GEEVNGDATA…ITVPLESIKP (210 aa)) are unstructured hinge. 2 disordered regions span residues 320–421 (LDLS…SGLD) and 434–492 (SLPP…QPVP). S355 bears the Phosphoserine; by CK2 mark. The short motif at 358 to 362 (DDELM) is the Autoinhibitory element. The span at 381-390 (GWNSFQSSDA) shows a compositional bias: polar residues. The residue at position 418 (S418) is a Phosphoserine. Low complexity predominate over residues 462–480 (SSSCSSPSSSATSLLHTVS). Residues 481–490 (PEPPRPPQQP) are compositionally biased toward pro residues. The GAE domain maps to 510-631 (SNILPVTVYD…NEMGDVDQFP (122 aa)).

This sequence belongs to the GGA protein family. In terms of assembly, monomer. Interacts with GGA2 and GGA3. Binds to clathrin and activated ARFs, including ARF1, ARF5 and ARF6. Interacts with RABEP1. Interacts with RABGEF1. Interacts with the type-I membrane proteins LRP3, M6PR/CD-MPR and IGF2R/CI-MPR. Interacts (via N-terminal VHS domain) with SORL1/sorLA and SORT1 (via C-terminal cytosolic domain). Interacts with EPN4. Interacts with CCDC91. Interacts with HEATR5B/p200a. Interacts with SYNRG/gamma-synergin. Interacts (via GAE doamin) with NECAP1 and NECAP2. Interacts (via GAE domain) with AFTPH/aftiphilin. Interacts with TSG101 and UBC. Interacts with RNF11. Interacts (via VHS domain) with BACE1 (via DXXLL motif); the interaction highly increases when BACE1 is phosphorylated at 'Ser-498'. Interacts with CNST. Interacts with ADRA2B. Interacts with ARL3; the interaction recruits, in collaboration with RABEP1, PKD1:PKD2 complex to trans-Golgi network and is required for ciliary targeting. In terms of processing, phosphorylated by CK2 and dephosphorylated by PP2A. Phosphorylation of GGA1 allows the internal DXXLL motif to bind the VHS domain and to inhibit the recognition of cargo signals. Post-translationally, ubiquitinated. As to expression, ubiquitously expressed.

It localises to the golgi apparatus. The protein localises to the trans-Golgi network membrane. Its subcellular location is the endosome membrane. The protein resides in the early endosome membrane. Its function is as follows. Plays a role in protein sorting and trafficking between the trans-Golgi network (TGN) and endosomes. Mediates the ARF-dependent recruitment of clathrin to the TGN and binds ubiquitinated proteins and membrane cargo molecules with a cytosolic acidic cluster-dileucine (DXXLL) motif. Mediates export of the GPCR receptor ADRA2B to the cell surface. Required for targeting PKD1:PKD2 complex from the trans-Golgi network to the cilium membrane. Regulates retrograde transport of proteins such as phosphorylated form of BACE1 from endosomes to the trans-Golgi network. This Homo sapiens (Human) protein is ADP-ribosylation factor-binding protein GGA1 (GGA1).